We begin with the raw amino-acid sequence, 264 residues long: Type III pantothenate kinase (264 aa).

Residue 6 to 13 coordinates ATP; it reads DVRNTSIE. 109–112 is a binding site for substrate; sequence GADR. Catalysis depends on Asp-111, which acts as the Proton acceptor. Asp-131 lines the K(+) pocket. An ATP-binding site is contributed by Thr-134. Residue Thr-185 participates in substrate binding.

It belongs to the type III pantothenate kinase family. In terms of assembly, homodimer. It depends on NH4(+) as a cofactor. K(+) is required as a cofactor.

It is found in the cytoplasm. The catalysed reaction is (R)-pantothenate + ATP = (R)-4'-phosphopantothenate + ADP + H(+). It functions in the pathway cofactor biosynthesis; coenzyme A biosynthesis; CoA from (R)-pantothenate: step 1/5. Functionally, catalyzes the phosphorylation of pantothenate (Pan), the first step in CoA biosynthesis. The protein is Type III pantothenate kinase of Nocardia farcinica (strain IFM 10152).